The sequence spans 523 residues: 2-isopropylmalate synthase (523 aa).

A Pyruvate carboxyltransferase domain is found at 5–267; the sequence is VIIFDTTLRD…HTAINHQEIW (263 aa). Residues Asp-14, His-202, His-204, and Asn-238 each contribute to the Mn(2+) site. Residues 392 to 523 are regulatory domain; sequence RLDYFSVQSG…QHNENNKETV (132 aa).

The protein belongs to the alpha-IPM synthase/homocitrate synthase family. LeuA type 1 subfamily. Homodimer. The cofactor is Mn(2+).

Its subcellular location is the cytoplasm. The enzyme catalyses 3-methyl-2-oxobutanoate + acetyl-CoA + H2O = (2S)-2-isopropylmalate + CoA + H(+). It functions in the pathway amino-acid biosynthesis; L-leucine biosynthesis; L-leucine from 3-methyl-2-oxobutanoate: step 1/4. Functionally, catalyzes the condensation of the acetyl group of acetyl-CoA with 3-methyl-2-oxobutanoate (2-ketoisovalerate) to form 3-carboxy-3-hydroxy-4-methylpentanoate (2-isopropylmalate). This chain is 2-isopropylmalate synthase, found in Escherichia coli (strain SMS-3-5 / SECEC).